Here is a 1123-residue protein sequence, read N- to C-terminus: Inner tegument protein (1123 aa).

2 disordered regions span residues 1–27 and 1047–1123; these read MADRGLPSEAPVVTTSPAGPPSDGPMQ and RPLA…TSYQ. Residues 568–1123 form an interaction with large tegument protein region; sequence WDITPTTPAT…PTDLPLTSYQ (556 aa).

The protein belongs to the herpesviridae inner tegument protein family. Interacts (via C-terminus) with the large tegument protein/LTP (via N-terminus). Interacts with host DST. Interacts with host RIGI; this interaction inhibits RIGI activation. Interacts with host CGAS; this interaction inhibits host CGAS activation. Interacts with host TAOK3.

The protein resides in the virion tegument. Its subcellular location is the host cytoplasm. It localises to the host nucleus. It is found in the host Golgi apparatus. The protein localises to the host trans-Golgi network. It carries out the reaction L-asparaginyl-[protein] + H2O = L-aspartyl-[protein] + NH4(+). It catalyses the reaction L-glutaminyl-[protein] + H2O = L-glutamyl-[protein] + NH4(+). Functionally, plays an essential role in cytoplasmic secondary envelopment during viral egress. Interacts with the capsid via the large tegument protein/LTP and participates in its transport to the host trans-Golgi network (TGN) where secondary envelopment occurs. Modulates tegumentation and capsid accumulation at the viral assembly complex. Plays a role in microtubule-based retrograde axonal transport to promote neuroinvasion. Also plays a role in the inhibition of host immune response by acting as a viral deamidase. Deamidates host RIGI on two asparagines which becomes unable to sense viral dsRNA. In turn, its ability to trigger antiviral immune response and restrict viral replication is inhibited. Also deamidates a critical asparagine on host CGAS which abolishes cGAMP synthesis and downstream innate immune activation. In Homo sapiens (Human), this protein is Inner tegument protein (UL37).